A 330-amino-acid chain; its full sequence is Putative zinc finger protein CONSTANS-LIKE 11 (330 aa).

Positions 5, 8, 28, and 33 each coordinate Zn(2+). Residues 5-47 (CDFCGTEKALIYCKSDSAKLCLNCDVNVHSANPLSQRHTRSLL) form a B box-type 1; atypical zinc finger. Residues 48-88 (CEKCSLQPTAVHCMNENVSLCQGCQWTASNCTGLGHRLQSL) form a B box-type 2; degenerate zinc finger. One can recognise a CCT domain in the interval 276-318 (RDEAKKRYKQKKSKRMFGKQIRYASRKARADTRKRVKGRFVKS).

Belongs to the CONSTANS family.

It is found in the nucleus. The protein is Putative zinc finger protein CONSTANS-LIKE 11 (COL11) of Arabidopsis thaliana (Mouse-ear cress).